We begin with the raw amino-acid sequence, 797 residues long: Adhesion G-protein coupled receptor G7 (797 aa).

An N-terminal signal peptide occupies residues 1-26; it reads MASCRAWNLRVLVAVVCGLLTGIILG. Residues 27 to 438 lie on the Extracellular side of the membrane; that stretch reads LGIWRIVIRI…QYPKSLDILS (412 aa). N-linked (GlcNAc...) asparagine glycosylation is found at asparagine 82, asparagine 159, asparagine 178, asparagine 191, asparagine 247, asparagine 261, asparagine 312, asparagine 316, and asparagine 387. A GAIN-B domain is found at 275–428; that stretch reads FSVQKGASSS…AVLMTFKKDY (154 aa). Cystine bridges form between cysteine 383-cysteine 410 and cysteine 398-cysteine 412. Residues 383–428 form a GPS region; it reads CVYWNLSAKDWDTYGCQKDKGTDGFLRCRCNHTTNFAVLMTFKKDY. An N-linked (GlcNAc...) asparagine glycan is attached at asparagine 413. Residues 439 to 459 traverse the membrane as a helical segment; sequence NVGCALSVTGLALTVIFQIVT. The Cytoplasmic segment spans residues 460 to 468; that stretch reads RKVRKTSVT. Residues 469–489 form a helical membrane-spanning segment; that stretch reads WVLVNLCISMLIFNLLFVFGI. Topologically, residues 490-528 are extracellular; the sequence is ENSNKNLQTSDGDINNIDFDNNDIPRTDTINIPNPMCTA. A helical membrane pass occupies residues 529–549; the sequence is IAALLHYFLLVTFTWNALSAA. Topologically, residues 550 to 565 are cytoplasmic; it reads QLYYLLIRTMKPLPRH. A helical membrane pass occupies residues 566–586; it reads FILFISLIGWGVPAIVVAITV. Over 587-623 the chain is Extracellular; the sequence is GVIYSQNGNNPQWELDYRQEKICWLAIPEPNGVIKSP. The chain crosses the membrane as a helical span at residues 624 to 644; sequence LLWSFIVPVTIILISNVVMFI. The Cytoplasmic portion of the chain corresponds to 645–669; that stretch reads TISIKVLWKNNQNLTSTKKVSSMKK. Residues 670–690 form a helical membrane-spanning segment; sequence IVSTLSVAVVFGITWILAYLM. Over 691-698 the chain is Extracellular; it reads LVNDDSIR. A helical transmembrane segment spans residues 699 to 719; sequence IVFSYIFCLFNTTQGLQIFIL. At 720–797 the chain is on the cytoplasmic side; it reads YTVRTKVFQS…SESDNAKESI (78 aa).

It belongs to the G-protein coupled receptor 2 family. Adhesion G-protein coupled receptor (ADGR) subfamily.

It is found in the membrane. Its function is as follows. Orphan receptor. The sequence is that of Adhesion G-protein coupled receptor G7 (ADGRG7) from Homo sapiens (Human).